Consider the following 710-residue polypeptide: Choline transporter-like protein 5 (710 aa).

Residues 1-21 (MARKRKPPSSQGDPRRYDPDF) form a disordered region. Residues 1–32 (MARKRKPPSSQGDPRRYDPDFQGPTAKRTCTD) lie on the Cytoplasmic side of the membrane. A helical transmembrane segment spans residues 33–53 (VLCCLIFLLFILGYVLLGLLA). The Extracellular portion of the chain corresponds to 54–236 (WAHGDPRKMA…KLLEDYATSW (183 aa)). N-linked (GlcNAc...) asparagine glycosylation is found at Asn-82 and Asn-184. A helical transmembrane segment spans residues 237 to 257 (KWILIGLTVAMALSWTFLILL). The Cytoplasmic segment spans residues 258–260 (RFT). A helical membrane pass occupies residues 261-281 (AGFLFWFFIFGVLGIIGYGIW). Topologically, residues 282-319 (YCFLEYSSIQQRPQSTFWMYGFGIQRRVNMFFHLKETW) are extracellular. Residues 320–340 (FSMMIILSAIEIIIIIVLIFL) traverse the membrane as a helical segment. The Cytoplasmic segment spans residues 341–345 (RTRIQ). Residues 346–366 (VAIILLQEGSKAISYLPSALI) traverse the membrane as a helical segment. Topologically, residues 367–368 (YP) are extracellular. The chain crosses the membrane as a helical span at residues 369 to 389 (VLTFILLSICISYWAVTAVFL). The Cytoplasmic portion of the chain corresponds to 390–454 (ATSGVPIFKV…NYILTFQVYN (65 aa)). The helical transmembrane segment at 455 to 475 (LFAFLWLINFVIALGQCALAG) threads the bilayer. At 476 to 509 (AFASYYWAMKKPDDIPPYPLFTAFGRAVRYHTGS) the chain is on the extracellular side. The chain crosses the membrane as a helical span at residues 510-530 (LAFGSLILASVQMFKVIVEYL). The Cytoplasmic segment spans residues 531–604 (DRRLKKAQNS…KVTVTDEVTY (74 aa)). The chain crosses the membrane as a helical span at residues 605–625 (FVLLLGKVLVSGIVGVLAFLL). Residues 626–643 (FTERLQIIVDGPTTLNYY) lie on the Extracellular side of the membrane. A helical membrane pass occupies residues 644 to 664 (WVPFLTLVFGSYMIAHGFFSV). The Cytoplasmic segment spans residues 665 to 710 (YSMCVETIFICFLEDLERNEGSPSRPYFVTPALMNILLEQGKIKKQ).

The protein belongs to the CTL (choline transporter-like) family.

The protein resides in the cell membrane. The enzyme catalyses choline(out) + n H(+)(in) = choline(in) + n H(+)(out). Its function is as follows. Choline/H+ antiporter. This chain is Choline transporter-like protein 5 (Slc44a5), found in Mus musculus (Mouse).